A 311-amino-acid polypeptide reads, in one-letter code: ATP synthase subunit a (311 aa).

Transmembrane regions (helical) follow at residues 62–82, 123–143, 179–199, 213–233, 253–273, and 276–296; these read AVHV…GFFM, VAPM…MDLI, VTVF…WGFI, FWYF…VALI, IFIL…LGGI, and FGWA…FMVL.

The protein belongs to the ATPase A chain family. As to quaternary structure, F-type ATPases have 2 components, CF(1) - the catalytic core - and CF(0) - the membrane proton channel. CF(1) has five subunits: alpha(3), beta(3), gamma(1), delta(1), epsilon(1). CF(0) has three main subunits: a(1), b(2) and c(9-12). The alpha and beta chains form an alternating ring which encloses part of the gamma chain. CF(1) is attached to CF(0) by a central stalk formed by the gamma and epsilon chains, while a peripheral stalk is formed by the delta and b chains.

It localises to the cell inner membrane. Key component of the proton channel; it plays a direct role in the translocation of protons across the membrane. The protein is ATP synthase subunit a of Teredinibacter turnerae (strain ATCC 39867 / T7901).